Consider the following 305-residue polypeptide: 4-diphosphocytidyl-2-C-methyl-D-erythritol kinase (305 aa).

Residue Lys17 is part of the active site. Residue 111-121 (PVASGIGGGSA) participates in ATP binding. Asp154 is a catalytic residue.

The protein belongs to the GHMP kinase family. IspE subfamily.

The catalysed reaction is 4-CDP-2-C-methyl-D-erythritol + ATP = 4-CDP-2-C-methyl-D-erythritol 2-phosphate + ADP + H(+). It participates in isoprenoid biosynthesis; isopentenyl diphosphate biosynthesis via DXP pathway; isopentenyl diphosphate from 1-deoxy-D-xylulose 5-phosphate: step 3/6. Catalyzes the phosphorylation of the position 2 hydroxy group of 4-diphosphocytidyl-2C-methyl-D-erythritol. In Gluconacetobacter diazotrophicus (strain ATCC 49037 / DSM 5601 / CCUG 37298 / CIP 103539 / LMG 7603 / PAl5), this protein is 4-diphosphocytidyl-2-C-methyl-D-erythritol kinase.